A 506-amino-acid polypeptide reads, in one-letter code: Trans-cinnamate 4-monooxygenase (506 aa).

Residues Leu3–Val23 form a helical membrane-spanning segment. (E)-cinnamate is bound by residues Arg213–Gln218 and Ala306. Cys447 is a heme binding site.

The protein belongs to the cytochrome P450 family. It depends on heme as a cofactor.

It is found in the membrane. The catalysed reaction is (E)-cinnamate + reduced [NADPH--hemoprotein reductase] + O2 = (E)-4-coumarate + oxidized [NADPH--hemoprotein reductase] + H2O + H(+). It participates in phenylpropanoid metabolism; trans-4-coumarate biosynthesis; trans-4-coumarate from trans-cinnamate: step 1/1. Functionally, catalyzes the first oxidative step of the phenylpropanoid pathway in higher plants by transforming trans-cinnamate into p-coumarate. The compounds formed by this pathway are essential components for lignification, pollination, and defense against ultraviolet light, predators and pathogens. The sequence is that of Trans-cinnamate 4-monooxygenase (CYP73A2) from Ruta graveolens (Common rue).